The primary structure comprises 486 residues: Outer dynein arm-docking complex subunit 4 (486 aa).

3 TPR repeats span residues 14–47 (FTTYMAEGDQLFQRGEYVKAVESFTTALTLQPDD), 49–81 (NCLVSRSRCYVKLGDAENALKDAESSLKDNKNY), and 82–115 (FKGLYQKAEALYTMGDFEFALVYYHRGHKLRPEL). Residues 153–180 (GVHPQNLNPSNKKESKKHSKKTDKGEKT) are disordered. 4 TPR repeats span residues 314–347 (GNLHSYIGNALMDLGNMDRALHHHEKDLELAKKC), 354–387 (SRALDNIGRVYARIGKFQQAIEVWEKKLPLACGG), 391–424 (AWLFHEIGRCYLELKRYMEARDYGSRSLMAADDI), and 431–464 (LNASVLMAQAELKLSNYKASVLHFERALERAKLL).

Component of the outer dynein arm-docking complex along with ODAD1, ODAD2 and ODAD3.

Its subcellular location is the cytoplasm. It localises to the cytoskeleton. The protein localises to the cilium axoneme. Functionally, component of the outer dynein arm-docking complex (ODA-DC) that mediates outer dynein arms (ODA) binding onto the doublet microtubule. Plays an essential role for the assembly of ODA-DC and in the docking of ODA in ciliary axoneme. The polypeptide is Outer dynein arm-docking complex subunit 4 (odad4) (Danio rerio (Zebrafish)).